The primary structure comprises 160 residues: Ribonuclease H (160 aa).

The RNase H type-1 domain occupies 1-157 (MNIEIYTDGA…CDRLAVEACQ (157 aa)). Mg(2+) contacts are provided by Asp-8, Glu-49, Asp-85, and Asp-149.

Belongs to the RNase H family. As to quaternary structure, monomer. Mg(2+) is required as a cofactor.

Its subcellular location is the cytoplasm. The enzyme catalyses Endonucleolytic cleavage to 5'-phosphomonoester.. In terms of biological role, endonuclease that specifically degrades the RNA of RNA-DNA hybrids. The sequence is that of Ribonuclease H from Treponema denticola (strain ATCC 35405 / DSM 14222 / CIP 103919 / JCM 8153 / KCTC 15104).